We begin with the raw amino-acid sequence, 239 residues long: Tetrahydromethanopterin S-methyltransferase subunit A (239 aa).

Over 1–215 (MADKKAPAAG…EAAMIAKFNS (215 aa)) the chain is Cytoplasmic. Residue H85 coordinates 5-hydroxybenzimidazolylcob(I)amide. A helical transmembrane segment spans residues 216–238 (GYYNGKIQGIAIGLFLSIVIFSL). Position 239 (L239) is a topological domain, extracellular.

Belongs to the MtrA family. The complex is composed of 8 subunits; MtrA, MtrB, MtrC, MtrD, MtrE, MtrF, MtrG and MtrH. 5-hydroxybenzimidazolylcob(I)amide serves as cofactor.

It is found in the cell membrane. It catalyses the reaction 5-methyl-5,6,7,8-tetrahydromethanopterin + coenzyme M + 2 Na(+)(in) = 5,6,7,8-tetrahydromethanopterin + methyl-coenzyme M + 2 Na(+)(out). Its pathway is one-carbon metabolism; methanogenesis from CO(2); methyl-coenzyme M from 5,10-methylene-5,6,7,8-tetrahydromethanopterin: step 2/2. Part of a complex that catalyzes the formation of methyl-coenzyme M and tetrahydromethanopterin from coenzyme M and methyl-tetrahydromethanopterin. This is an energy-conserving, sodium-ion translocating step. This is Tetrahydromethanopterin S-methyltransferase subunit A from Methanococcus maripaludis (strain DSM 14266 / JCM 13030 / NBRC 101832 / S2 / LL).